Reading from the N-terminus, the 169-residue chain is Ribosome maturation factor RimM (169 aa).

Positions 95–168 (PPDTAYIHDL…EMTIRRFDEF (74 aa)) constitute a PRC barrel domain.

Belongs to the RimM family. As to quaternary structure, binds ribosomal protein uS19.

It is found in the cytoplasm. Its function is as follows. An accessory protein needed during the final step in the assembly of 30S ribosomal subunit, possibly for assembly of the head region. Essential for efficient processing of 16S rRNA. May be needed both before and after RbfA during the maturation of 16S rRNA. It has affinity for free ribosomal 30S subunits but not for 70S ribosomes. This is Ribosome maturation factor RimM from Prosthecochloris aestuarii (strain DSM 271 / SK 413).